Here is a 312-residue protein sequence, read N- to C-terminus: DNA-directed RNA polymerase subunit alpha (312 aa).

The segment at 1-226 (MIEFEKPKIT…DHLNLFVDLS (226 aa)) is alpha N-terminal domain (alpha-NTD). Residues 243–312 (TERVLDKIIE…ELGLSLKKRK (70 aa)) are alpha C-terminal domain (alpha-CTD).

Belongs to the RNA polymerase alpha chain family. Homodimer. The RNAP catalytic core consists of 2 alpha, 1 beta, 1 beta' and 1 omega subunit. When a sigma factor is associated with the core the holoenzyme is formed, which can initiate transcription.

It carries out the reaction RNA(n) + a ribonucleoside 5'-triphosphate = RNA(n+1) + diphosphate. In terms of biological role, DNA-dependent RNA polymerase catalyzes the transcription of DNA into RNA using the four ribonucleoside triphosphates as substrates. In Lactococcus lactis subsp. cremoris (strain MG1363), this protein is DNA-directed RNA polymerase subunit alpha.